We begin with the raw amino-acid sequence, 579 residues long: MQLLKQLKWYFIQEYKNYTIAIFLLISISILQLYPPKLIGMLIDISIRKQTQKAPILPLILIILFISIIIYILRYMWRLFLFGASYKLAIKLRIEIYNYLCQQKNDFYLKHKTGDLIARITNDVDKVVFAAGEGVLTLVDSLIMGVSVIIVMITQISWKLTIISLIPMPIMAIIIKRFGKKLYSSYHDAQTTFSHLNNYAQENLNNIHMIKAFGLENYYSKKFLKIAHKTRKKNIKIAKIDSKFNPIIHLFISISHLLAITIGSYMITYNEISTGELMSFILYLGLIIWPMLAFAWMFNIIERGSASWDRIKSMINNNLFIHKKKYKNISNIPGILEVKINYFKYSKSNKTILKNINFKIRPGQILGICGPTGSGKSTLLKLIQRQIELYDGKISYHSIPITQFNIVEWRKKMSIVNQTTFLFSDTIANNIKLGKPYASQKEIEQATTFSDLHNDIMTFPQGYNTQVGERGIMLSGGQKQRISIARALLLKSEILILDNALSSVDNKTEINILENLKTWKKNKNTIIMCTHRLSSLINSDLIIVIENGSITQIGKHKLLIQNLKQWYGKTYLHQKLSNH.

Positions Tyr18–Arg303 constitute an ABC transmembrane type-1 domain. 6 helical membrane passes run Ile20 to Gly40, Lys53 to Leu73, Gly134 to Thr154, Gln155 to Ile175, Ile247 to Ile267, and Ile281 to Ile301. In terms of domain architecture, ABC transporter spans Val338–Leu572. An ATP-binding site is contributed by Gly370–Ser377.

It belongs to the ABC transporter superfamily. Drug exporter-2 (TC 3.A.1.117) family.

It localises to the cell membrane. It catalyses the reaction ATP + H2O + xenobioticSide 1 = ADP + phosphate + xenobioticSide 2.. The chain is Multidrug resistance-like ATP-binding protein MdlA (mdlA) from Buchnera aphidicola subsp. Baizongia pistaciae (strain Bp).